The primary structure comprises 889 residues: Translation initiation factor IF-2 (889 aa).

Disordered regions lie at residues 47-85 and 206-302; these read GHLK…AKSV and AEAA…FTKP. 3 stretches are compositionally biased toward basic and acidic residues: residues 52–61, 214–241, and 252–263; these read QHGDESEAKP, AAKK…KEVV, and AEDKSDSADESG. Residues 389 to 558 enclose the tr-type G domain; the sequence is TRAPVVTIMG…LLQSEVLELT (170 aa). The tract at residues 398–405 is G1; sequence GHVDHGKT. 398-405 is a binding site for GTP; it reads GHVDHGKT. Residues 423 to 427 form a G2 region; that stretch reads GITQH. A G3 region spans residues 444 to 447; that stretch reads DTPG. GTP contacts are provided by residues 444 to 448 and 498 to 501; these read DTPGH and NKMD. The segment at 498 to 501 is G4; it reads NKMD. A G5 region spans residues 534-536; the sequence is SAK.

The protein belongs to the TRAFAC class translation factor GTPase superfamily. Classic translation factor GTPase family. IF-2 subfamily.

It localises to the cytoplasm. Its function is as follows. One of the essential components for the initiation of protein synthesis. Protects formylmethionyl-tRNA from spontaneous hydrolysis and promotes its binding to the 30S ribosomal subunits. Also involved in the hydrolysis of GTP during the formation of the 70S ribosomal complex. This Colwellia psychrerythraea (strain 34H / ATCC BAA-681) (Vibrio psychroerythus) protein is Translation initiation factor IF-2.